The sequence spans 104 residues: Protamine-3 (104 aa).

Positions 1–104 (MGSRCAKLST…PSPEPKQKHS (104 aa)) are disordered. The segment covering 45 to 70 (EGEEEEEDEEDEEEEDDDEEDEEEEQ) has biased composition (acidic residues). At serine 96 the chain carries Phosphoserine.

The protein belongs to the protamine P3 family. As to expression, testis.

The protein resides in the nucleus. The protein localises to the chromosome. Functionally, protamines substitute for histones in the chromatin of sperm during the haploid phase of spermatogenesis. They compact sperm DNA into a highly condensed, stable and inactive complex. The polypeptide is Protamine-3 (Prm3) (Rattus norvegicus (Rat)).